The following is a 111-amino-acid chain: Cytochrome c 2.1 (111 aa).

An N-acetylserine modification is found at Ser-2. Heme c contacts are provided by Cys-20, Cys-23, His-24, and Met-85.

This sequence belongs to the cytochrome c family. In terms of processing, binds 1 heme c group covalently per subunit.

It localises to the mitochondrion intermembrane space. Its function is as follows. Electron carrier protein. The oxidized form of the cytochrome c heme group can accept an electron from the heme group of the cytochrome c1 subunit of cytochrome reductase. Cytochrome c then transfers this electron to the cytochrome oxidase complex, the final protein carrier in the mitochondrial electron-transport chain. The polypeptide is Cytochrome c 2.1 (cyc-2.1) (Caenorhabditis elegans).